The sequence spans 196 residues: Putative NADH dehydrogenase/NAD(P)H nitroreductase Smlt0482 (196 aa).

Belongs to the nitroreductase family. HadB/RutE subfamily. The cofactor is FMN.

In Stenotrophomonas maltophilia (strain K279a), this protein is Putative NADH dehydrogenase/NAD(P)H nitroreductase Smlt0482.